Here is a 184-residue protein sequence, read N- to C-terminus: ATP synthase subunit b 1 (184 aa).

The chain crosses the membrane as a helical span at residues 36–55; that stretch reads NILNLAILVGVLVFYGRKVV.

The protein belongs to the ATPase B chain family. As to quaternary structure, F-type ATPases have 2 components, F(1) - the catalytic core - and F(0) - the membrane proton channel. F(1) has five subunits: alpha(3), beta(3), gamma(1), delta(1), epsilon(1). F(0) has four main subunits: a(1), b(1), b'(1) and c(10-14). The alpha and beta chains form an alternating ring which encloses part of the gamma chain. F(1) is attached to F(0) by a central stalk formed by the gamma and epsilon chains, while a peripheral stalk is formed by the delta, b and b' chains.

Its subcellular location is the cellular thylakoid membrane. In terms of biological role, f(1)F(0) ATP synthase produces ATP from ADP in the presence of a proton or sodium gradient. F-type ATPases consist of two structural domains, F(1) containing the extramembraneous catalytic core and F(0) containing the membrane proton channel, linked together by a central stalk and a peripheral stalk. During catalysis, ATP synthesis in the catalytic domain of F(1) is coupled via a rotary mechanism of the central stalk subunits to proton translocation. Component of the F(0) channel, it forms part of the peripheral stalk, linking F(1) to F(0). This is ATP synthase subunit b 1 from Crocosphaera subtropica (strain ATCC 51142 / BH68) (Cyanothece sp. (strain ATCC 51142)).